The chain runs to 217 residues: Large ribosomal subunit protein uL3 (217 aa).

The protein belongs to the universal ribosomal protein uL3 family. As to quaternary structure, part of the 50S ribosomal subunit. Forms a cluster with proteins L14 and L19.

One of the primary rRNA binding proteins, it binds directly near the 3'-end of the 23S rRNA, where it nucleates assembly of the 50S subunit. This chain is Large ribosomal subunit protein uL3, found in Mycobacterium leprae (strain TN).